Reading from the N-terminus, the 223-residue chain is Alpha-S2-casein (223 aa).

A signal peptide spans 1 to 15 (MKLFIFTCLLAVALA). S23, S24, S25, S28, S46, S71, S72, and S73 each carry phosphoserine. Repeats lie at residues 76-128 (FADI…TLGK) and 129-223 (EQIS…ERQA). 3 positions are modified to phosphoserine: S132, S147, and S155.

This sequence belongs to the alpha-casein family. Mammary gland specific. Secreted in milk.

It is found in the secreted. Functionally, important role in the capacity of milk to transport calcium phosphate. The chain is Alpha-S2-casein (CSN1S2) from Cavia porcellus (Guinea pig).